Reading from the N-terminus, the 264-residue chain is Thymidylate synthase (264 aa).

Arginine 21 lines the dUMP pocket. Residue histidine 51 participates in (6R)-5,10-methylene-5,6,7,8-tetrahydrofolate binding. 126–127 is a binding site for dUMP; the sequence is RR. The active-site Nucleophile is cysteine 146. DUMP-binding positions include 166-169, asparagine 177, and 207-209; these read RSCD and HLY. Aspartate 169 is a (6R)-5,10-methylene-5,6,7,8-tetrahydrofolate binding site. A (6R)-5,10-methylene-5,6,7,8-tetrahydrofolate-binding site is contributed by alanine 263.

It belongs to the thymidylate synthase family. Bacterial-type ThyA subfamily. As to quaternary structure, homodimer.

The protein localises to the cytoplasm. It catalyses the reaction dUMP + (6R)-5,10-methylene-5,6,7,8-tetrahydrofolate = 7,8-dihydrofolate + dTMP. It functions in the pathway pyrimidine metabolism; dTTP biosynthesis. Functionally, catalyzes the reductive methylation of 2'-deoxyuridine-5'-monophosphate (dUMP) to 2'-deoxythymidine-5'-monophosphate (dTMP) while utilizing 5,10-methylenetetrahydrofolate (mTHF) as the methyl donor and reductant in the reaction, yielding dihydrofolate (DHF) as a by-product. This enzymatic reaction provides an intracellular de novo source of dTMP, an essential precursor for DNA biosynthesis. This is Thymidylate synthase from Escherichia coli O9:H4 (strain HS).